Reading from the N-terminus, the 695-residue chain is G-protein coupled receptor-associated protein LMBRD2 (695 aa).

The Extracellular portion of the chain corresponds to 1–5 (MSGAA). The chain crosses the membrane as a helical span at residues 6-21 (LGLEIVFVFFLALFLL). The Cytoplasmic portion of the chain corresponds to 22 to 32 (HRYGDFKKQHR). A helical transmembrane segment spans residues 33–53 (LVIIGTLLAWYLCFLIVFILP). Topologically, residues 54 to 105 (LDVSTTIYNRCKHAAANSSPPENSNITGLYATANPVPSQHPCFKPWSYIPDG) are extracellular. N-linked (GlcNAc...) asparagine glycosylation is present at Asn-78. Residues 106–126 (IMPIFWRVVYWTSQFLTWILL) form a helical membrane-spanning segment. The Cytoplasmic portion of the chain corresponds to 127-150 (PFMQSYARSGGFSITGKIKTALIE). Residues 151–171 (NAIYYGTYLLIFGAFLIYVAV) form a helical membrane-spanning segment. The Extracellular portion of the chain corresponds to 172 to 186 (NPHLHLEWNQLQTIG). The helical transmembrane segment at 187-207 (IAAANTWGLFLLVLLLGYGLV) threads the bilayer. Residues 208–387 (EIPRSYWNGA…ECLLRPWFYK (180 aa)) lie on the Cytoplasmic side of the membrane. Positions 227–262 (YFKAAKLMTEKADAEENLEDAMEEVRKVNESIKYNH) form a coiled coil. Residues 388 to 408 (ILAVVLSIFSVIVVWSECTFF) form a helical membrane-spanning segment. The Extracellular segment spans residues 409-432 (STTPVLSLFAVFIQLAEKTYNYIY). Residues 433 to 453 (IEIACFLSIFFLSICVYSTVF) form a helical membrane-spanning segment. The Cytoplasmic segment spans residues 454-473 (RIRVFNYYYLASHHQTDAYS). Residues 474–494 (LLFSGMLFCRLTPPLCLNFLG) form a helical membrane-spanning segment. Residues 495–521 (LTHMDSSISHKNTQPTAYTSIMGSMKV) are Extracellular-facing. Residues 522 to 542 (LSFIADGFYIYYPMLVVILCI) form a helical membrane-spanning segment. Over 543 to 695 (ATYFSLGTRC…MSRSDIFNDV (153 aa)) the chain is Cytoplasmic. Positions 571–603 (LVNEGKELIRKEKRKRQRQEEGENRRREWKERY) form a coiled coil. Positions 581-628 (KEKRKRQRQEEGENRRREWKERYGHNREDSTRNRNIHTDPKESNFSDV) are disordered. The segment covering 588 to 624 (RQEEGENRRREWKERYGHNREDSTRNRNIHTDPKESN) has biased composition (basic and acidic residues). Phosphoserine is present on Ser-633. Residues 662-682 (AETFTDDPLESESGRYQPGGR) form a disordered region.

It belongs to the LIMR family.

The protein localises to the cell membrane. In terms of biological role, recruited to ligand-activated beta-2 adrenergic receptor/ADRB2, it negatively regulates the adrenergic receptor signaling pathway. May also regulate other G-protein coupled receptors including type-1 angiotensin II receptor/AGTR1. The sequence is that of G-protein coupled receptor-associated protein LMBRD2 from Homo sapiens (Human).